A 502-amino-acid polypeptide reads, in one-letter code: Arabinose import ATP-binding protein AraG (502 aa).

ABC transporter domains are found at residues 6 to 241 (LEFD…MVGR) and 252 to 497 (REVG…MVES). 38–45 (GENGAGKS) lines the ATP pocket.

This sequence belongs to the ABC transporter superfamily. Arabinose importer (TC 3.A.1.2.2) family. The complex is composed of two ATP-binding proteins (AraG), two transmembrane proteins (AraH) and a solute-binding protein (AraF).

It is found in the cell inner membrane. The catalysed reaction is L-arabinose(out) + ATP + H2O = L-arabinose(in) + ADP + phosphate + H(+). Its function is as follows. Part of the ABC transporter complex AraFGH involved in arabinose import. Responsible for energy coupling to the transport system. The polypeptide is Arabinose import ATP-binding protein AraG (Mannheimia succiniciproducens (strain KCTC 0769BP / MBEL55E)).